The sequence spans 331 residues: Ketol-acid reductoisomerase (NADP(+)) (331 aa).

The KARI N-terminal Rossmann domain maps to 2–182 (ARMYYDADAQ…GGTRAGILET (181 aa)). NADP(+) is bound by residues 25–28 (YGSQ), Ser51, Ser53, and 83–86 (DEVQ). Residue His108 is part of the active site. Gly134 serves as a coordination point for NADP(+). Positions 183–328 (TFREETETDL…QELRSMFSWL (146 aa)) constitute a KARI C-terminal knotted domain. Residues Asp191, Glu195, Glu227, and Glu231 each contribute to the Mg(2+) site. Residue Ser252 participates in substrate binding.

It belongs to the ketol-acid reductoisomerase family. Mg(2+) is required as a cofactor.

The enzyme catalyses (2R)-2,3-dihydroxy-3-methylbutanoate + NADP(+) = (2S)-2-acetolactate + NADPH + H(+). It carries out the reaction (2R,3R)-2,3-dihydroxy-3-methylpentanoate + NADP(+) = (S)-2-ethyl-2-hydroxy-3-oxobutanoate + NADPH + H(+). The protein operates within amino-acid biosynthesis; L-isoleucine biosynthesis; L-isoleucine from 2-oxobutanoate: step 2/4. It participates in amino-acid biosynthesis; L-valine biosynthesis; L-valine from pyruvate: step 2/4. Its function is as follows. Involved in the biosynthesis of branched-chain amino acids (BCAA). Catalyzes an alkyl-migration followed by a ketol-acid reduction of (S)-2-acetolactate (S2AL) to yield (R)-2,3-dihydroxy-isovalerate. In the isomerase reaction, S2AL is rearranged via a Mg-dependent methyl migration to produce 3-hydroxy-3-methyl-2-ketobutyrate (HMKB). In the reductase reaction, this 2-ketoacid undergoes a metal-dependent reduction by NADPH to yield (R)-2,3-dihydroxy-isovalerate. This Thermosynechococcus vestitus (strain NIES-2133 / IAM M-273 / BP-1) protein is Ketol-acid reductoisomerase (NADP(+)).